Reading from the N-terminus, the 327-residue chain is Olfactory receptor 51T1 (327 aa).

The Extracellular portion of the chain corresponds to 1–27; sequence MAIFNNTTSSSSNFLLTAFPGLECAHV. Residues Asn-5 and Asn-6 are each glycosylated (N-linked (GlcNAc...) asparagine). The helical transmembrane segment at 28–48 threads the bilayer; sequence WISIPVCCLYTIALLGNSMIF. The Cytoplasmic portion of the chain corresponds to 49–56; it reads LVIITKRR. A helical membrane pass occupies residues 57–77; sequence LHKPMYYFLSMLAAVDLCLTI. Residues 78–101 are Extracellular-facing; the sequence is TTLPTVLGVLWFHAREISFKACFI. Residues 102 to 122 form a helical membrane-spanning segment; that stretch reads QMFFVHAFSLLESSVLVAMAF. Over 123–141 the chain is Cytoplasmic; the sequence is DRFVAICNPLNYATILTDR. A helical transmembrane segment spans residues 142–162; the sequence is MVLVIGLVICIRPAVFLLPLL. The Extracellular segment spans residues 163-198; sequence VAINTVSFHGGHELSHPFCYHPEVIKYTYSKPWISS. A helical transmembrane segment spans residues 199 to 219; it reads FWGLFLQLYLNGTDVLFILFS. At 220 to 239 the chain is on the cytoplasmic side; that stretch reads YVLILRTVLGIVARKKQQKA. A helical membrane pass occupies residues 240 to 260; sequence LSTCVCHICAVTIFYVPLISL. Residues 261–275 are Extracellular-facing; that stretch reads SLAHRLFHSTPRVLC. Residues 276–296 form a helical membrane-spanning segment; sequence STLANIYLLLPPVLNPIIYSL. The Cytoplasmic portion of the chain corresponds to 297–327; sequence KTKTIRQAMFQLLQSKGSWGFNVRGLRGRWD.

Belongs to the G-protein coupled receptor 1 family.

Its subcellular location is the cell membrane. In terms of biological role, odorant receptor. The polypeptide is Olfactory receptor 51T1 (OR51T1) (Homo sapiens (Human)).